A 235-amino-acid polypeptide reads, in one-letter code: Class B acid phosphatase (235 aa).

The signal sequence occupies residues 1–22 (MKNLVKLSLIAMLTAATLPAMA). Asp67 serves as the catalytic Nucleophile. The Mg(2+) site is built by Asp67 and Asp69. Asp69 acts as the Proton donor in catalysis. Residues 135–136 (TG) and Lys175 each bind substrate. Residue Asp190 coordinates Mg(2+).

The protein belongs to the class B bacterial acid phosphatase family. In terms of assembly, homotetramer. The cofactor is Mg(2+).

The protein resides in the periplasm. It carries out the reaction a phosphate monoester + H2O = an alcohol + phosphate. In terms of biological role, dephosphorylates several organic phosphate monoesters. Also has a phosphotransferase activity catalyzing the transfer of low-energy phosphate groups from organic phosphate monoesters to free hydroxyl groups of various organic compounds. The polypeptide is Class B acid phosphatase (Aggregatibacter actinomycetemcomitans serotype C (strain D11S-1) (Actinobacillus actinomycetemcomitans)).